We begin with the raw amino-acid sequence, 202 residues long: Small ribosomal subunit protein uS4 (202 aa).

The tract at residues 17 to 42 (ELPGLSRKTPRRAYPPGQHGQARKKR) is disordered. In terms of domain architecture, S4 RNA-binding spans 90–152 (MRLDNTIFRL…DASRKLIETH (63 aa)).

This sequence belongs to the universal ribosomal protein uS4 family. As to quaternary structure, part of the 30S ribosomal subunit. Contacts protein S5. The interaction surface between S4 and S5 is involved in control of translational fidelity.

Functionally, one of the primary rRNA binding proteins, it binds directly to 16S rRNA where it nucleates assembly of the body of the 30S subunit. In terms of biological role, with S5 and S12 plays an important role in translational accuracy. This Acaryochloris marina (strain MBIC 11017) protein is Small ribosomal subunit protein uS4.